Here is a 247-residue protein sequence, read N- to C-terminus: Triosephosphate isomerase (247 aa).

Residues N10 and K12 each coordinate substrate. The active-site Electrophile is H94. E164 functions as the Proton acceptor in the catalytic mechanism.

The protein belongs to the triosephosphate isomerase family. As to quaternary structure, homodimer.

It catalyses the reaction D-glyceraldehyde 3-phosphate = dihydroxyacetone phosphate. The protein operates within carbohydrate biosynthesis; gluconeogenesis. It participates in carbohydrate degradation; glycolysis; D-glyceraldehyde 3-phosphate from glycerone phosphate: step 1/1. This is Triosephosphate isomerase (Tpi) from Drosophila simulans (Fruit fly).